An 809-amino-acid polypeptide reads, in one-letter code: MNDWASLGIGSIGEAVFSKLLKVVIDEAKKFKAFKPLSKDLVSTMEILFPLTQKIDSMQKELDFGVKELKELRDTIERADVAVRKFPRVKWYEKSKYTRKIERINKDMLKFCQIDLQLLQHRNQLTLLGLTGNLVNSVDGLSKRMDLLSVPAPVFRDLCSVPKLDKVIVGLDWPLGELKKRLLDDSVVTLVVSAPPGCGKTTLVSRLCDDPDIKGKFKHIFFNVVSNTPNFRVIVQNLLQHNGYNALTFENDSQAEVGLRKLLEELKENGPILLVLDDVWRGADSFLQKFQIKLPNYKILVTSRFDFPSFDSNYRLKPLEDDDARALLIHWASRPCNTSPDEYEDLLQKILKRCNGFPIVIEVVGVSLKGRSLNTWKGQVESWSEGEKILGKPYPTVLECLQPSFDALDPNLKECFLDMGSFLEDQKIRASVIIDMWVELYGKGSSILYMYLEDLASQNLLKLVPLGTNEHEDGFYNDFLVTQHDILRELAICQSEFKENLERKRLNLEILENTFPDWCLNTINASLLSISTDDLFSSKWLEMDCPNVEALVLNLSSSDYALPSFISGMKKLKVLTITNHGFYPARLSNFSCLSSLPNLKRIRLEKVSITLLDIPQLQLSSLKKLSLVMCSFGEVFYDTEDIVVSNALSKLQEIDIDYCYDLDELPYWISEIVSLKTLSITNCNKLSQLPEAIGNLSRLEVLRLCSSMNLSELPEATEGLSNLRFLDISHCLGLRKLPQEIGKLQNLKKISMRKCSGCELPESVTNLENLEVKCDEETGLLWERLKPKMRNLRVQEEEIEHNLNLLQMF.

The RPW8 domain occupies 1–150 (MNDWASLGIG…LSKRMDLLSV (150 aa)). The stretch at 50-86 (PLTQKIDSMQKELDFGVKELKELRDTIERADVAVRKF) forms a coiled coil. 2 consecutive NB-ARC domains span residues 153 to 280 (PVFR…DDVW) and 339 to 438 (SPDE…DMWV). 194–201 (APPGCGKT) serves as a coordination point for ATP. Residues 494 to 515 (QSEFKENLERKRLNLEILENTF) adopt a coiled-coil conformation. LRR repeat units lie at residues 650–672 (KLQE…ISEI), 674–696 (SLKT…IGNL), 698–720 (RLEV…TEGL), and 722–744 (NLRF…IGKL).

Belongs to the disease resistance NB-LRR family.

Its function is as follows. Probable disease resistance protein. In Arabidopsis thaliana (Mouse-ear cress), this protein is Probable disease resistance protein At5g66900.